Here is a 762-residue protein sequence, read N- to C-terminus: Phosphoribosylformylglycinamidine synthase subunit PurL (762 aa).

Histidine 58 is a catalytic residue. Tyrosine 61 and lysine 105 together coordinate ATP. Glutamate 107 contacts Mg(2+). Substrate-binding positions include 108–111 (SHNH) and arginine 130. Histidine 109 acts as the Proton acceptor in catalysis. Mg(2+) is bound at residue aspartate 131. Substrate is bound at residue glutamine 260. Aspartate 288 contributes to the Mg(2+) binding site. Substrate is bound at residue 332–334 (ESQ). 2 residues coordinate ATP: asparagine 520 and glycine 557. Residue asparagine 558 participates in Mg(2+) binding. Serine 560 provides a ligand contact to substrate.

Belongs to the FGAMS family. Monomer. Part of the FGAM synthase complex composed of 1 PurL, 1 PurQ and 2 PurS subunits.

The protein resides in the cytoplasm. The enzyme catalyses N(2)-formyl-N(1)-(5-phospho-beta-D-ribosyl)glycinamide + L-glutamine + ATP + H2O = 2-formamido-N(1)-(5-O-phospho-beta-D-ribosyl)acetamidine + L-glutamate + ADP + phosphate + H(+). Its pathway is purine metabolism; IMP biosynthesis via de novo pathway; 5-amino-1-(5-phospho-D-ribosyl)imidazole from N(2)-formyl-N(1)-(5-phospho-D-ribosyl)glycinamide: step 1/2. In terms of biological role, part of the phosphoribosylformylglycinamidine synthase complex involved in the purines biosynthetic pathway. Catalyzes the ATP-dependent conversion of formylglycinamide ribonucleotide (FGAR) and glutamine to yield formylglycinamidine ribonucleotide (FGAM) and glutamate. The FGAM synthase complex is composed of three subunits. PurQ produces an ammonia molecule by converting glutamine to glutamate. PurL transfers the ammonia molecule to FGAR to form FGAM in an ATP-dependent manner. PurS interacts with PurQ and PurL and is thought to assist in the transfer of the ammonia molecule from PurQ to PurL. The chain is Phosphoribosylformylglycinamidine synthase subunit PurL from Rhodococcus erythropolis (strain PR4 / NBRC 100887).